A 115-amino-acid polypeptide reads, in one-letter code: Large ribosomal subunit protein bL19 (115 aa).

Belongs to the bacterial ribosomal protein bL19 family.

Its function is as follows. This protein is located at the 30S-50S ribosomal subunit interface and may play a role in the structure and function of the aminoacyl-tRNA binding site. This is Large ribosomal subunit protein bL19 from Escherichia coli O139:H28 (strain E24377A / ETEC).